Here is a 270-residue protein sequence, read N- to C-terminus: Bacterial microcompartment shell protein PduB (270 aa).

2 BMC circularly permuted domains span residues 47-152 and 154-262; these read EFVG…DRTF and DVYA…GSEP.

Belongs to the EutL/PduB family. In terms of assembly, homotrimerizes to form a pseudohexamer with a central pore. The trimers pack into an array. Both forms interact with shell protein PduA. In purified BMCs seen as a 30.0 kDa and 25.0 kDa form; the smaller form is called PduB'.

It localises to the bacterial microcompartment. It functions in the pathway polyol metabolism; 1,2-propanediol degradation. Functionally, the two proteins produced are among the major shell proteins of the bacterial microcompartment (BMC) shell dedicated to 1,2-propanediol (1,2-PD) degradation. Overexpression of the gene gives large amorphous intracellular structures; when only PduB is overexpressed large circular bodies are observed which contain concentric rings, whereas with PduB' overexpression internal bodies with regular straight-lined structures were generated. The N-terminus of the long form (PduB) is required for correct formation of BMCs. May play a major role in binding the enzyme contents to the shell. Expression of a cosmid containing the full 21-gene pdu operon in E.coli allows E.coli to grow on 1,2-propanediol (1,2-PD) with the appearance of BMCs in its cytoplasm. Its function is as follows. The 1,2-PD-specific bacterial microcompartment (BMC) concentrates low levels of 1,2-PD catabolic enzymes, concentrates volatile reaction intermediates thus enhancing pathway flux and keeps the level of toxic, mutagenic propionaldehyde low. The protein is Bacterial microcompartment shell protein PduB of Citrobacter freundii.